The sequence spans 549 residues: Cation/acetate symporter ActP (549 aa).

Helical transmembrane passes span 33–53 (WQAI…TYWA), 77–97 (LAIA…ALVF), 103–123 (GLIY…LIAE), 148–168 (ILSA…QMVG), 183–203 (IAVV…GMLA), 206–226 (WVQI…AFMV), 262–282 (ISAL…PHIL), 303–323 (GFMG…IMLV), 355–375 (LFLG…VAGL), 404–424 (VSKI…MLFE), 428–448 (IAFM…PIIL), 464–484 (GGWL…TIWV), and 493–513 (IFPY…GIWF).

This sequence belongs to the sodium:solute symporter (SSF) (TC 2.A.21) family.

It is found in the cell inner membrane. Functionally, transports acetate. This is Cation/acetate symporter ActP from Shigella boydii serotype 4 (strain Sb227).